The following is a 435-amino-acid chain: IAA-amino acid hydrolase ILR1-like 5 (435 aa).

The N-terminal stretch at M1–S25 is a signal peptide. 5 residues coordinate Mn(2+): C134, H136, E170, H194, and H397. The Prevents secretion from ER motif lies at K432–L435.

It belongs to the peptidase M20 family.

It localises to the endoplasmic reticulum lumen. In terms of biological role, hydrolyzes certain amino acid conjugates of the plant growth regulator indole-3-acetic acid (IAA). The protein is IAA-amino acid hydrolase ILR1-like 5 of Arabidopsis thaliana (Mouse-ear cress).